Here is a 145-residue protein sequence, read N- to C-terminus: Ventricular natriuretic peptide (145 aa).

An N-terminal signal peptide occupies residues 1-24 (MRMGKIAVGYGFLLLLVFQLGVRA). A disulfide bridge connects residues C117 and C133.

This sequence belongs to the natriuretic peptide family. In terms of tissue distribution, heart atrium and ventricle, and to a very low extent in brain.

It is found in the secreted. Exhibits natriuretic and vasodepressor activity. This chain is Ventricular natriuretic peptide (vnp), found in Acipenser transmontanus (White sturgeon).